The sequence spans 256 residues: Putative bidirectional sugar transporter SWEET7e (256 aa).

At Met-1–Asn-9 the chain is on the extracellular side. The chain crosses the membrane as a helical span at residues Val-10–Phe-30. One can recognise a MtN3/slv 1 domain in the interval Val-10 to Lys-97. The Cytoplasmic segment spans residues Trp-31–Asp-45. A helical membrane pass occupies residues Pro-46 to His-66. Over Pro-67–Ser-69 the chain is Extracellular. Residues Ile-70–Phe-90 traverse the membrane as a helical segment. At Phe-91 to Lys-100 the chain is on the cytoplasmic side. Residues Met-101–Leu-121 traverse the membrane as a helical segment. The Extracellular portion of the chain corresponds to Gly-122–Ser-130. A helical transmembrane segment spans residues Leu-131–Ile-151. Residues Val-133–Gln-212 enclose the MtN3/slv 2 domain. Residues Met-152–Met-164 are Cytoplasmic-facing. Residues Pro-165–Ile-185 traverse the membrane as a helical segment. A topological domain (extracellular) is located at residue Arg-186. A helical transmembrane segment spans residues Phe-187–Ile-207. Topologically, residues Leu-208–Pro-256 are cytoplasmic.

This sequence belongs to the SWEET sugar transporter family. Forms homooligomers and/or heterooligomers.

It is found in the cell membrane. Its function is as follows. Mediates both low-affinity uptake and efflux of sugar across the plasma membrane. This chain is Putative bidirectional sugar transporter SWEET7e (SWEET7E), found in Oryza sativa subsp. japonica (Rice).